A 208-amino-acid polypeptide reads, in one-letter code: Uracil phosphoribosyltransferase (208 aa).

5-phospho-alpha-D-ribose 1-diphosphate-binding positions include Arg78, Arg103, and 130–138; that span reads DPMLATGGT. Uracil-binding positions include Ile193 and 198 to 200; that span reads GDA. Asp199 serves as a coordination point for 5-phospho-alpha-D-ribose 1-diphosphate.

This sequence belongs to the UPRTase family. Requires Mg(2+) as cofactor.

The enzyme catalyses UMP + diphosphate = 5-phospho-alpha-D-ribose 1-diphosphate + uracil. It participates in pyrimidine metabolism; UMP biosynthesis via salvage pathway; UMP from uracil: step 1/1. Its activity is regulated as follows. Allosterically activated by GTP. Catalyzes the conversion of uracil and 5-phospho-alpha-D-ribose 1-diphosphate (PRPP) to UMP and diphosphate. This Maridesulfovibrio salexigens (strain ATCC 14822 / DSM 2638 / NCIMB 8403 / VKM B-1763) (Desulfovibrio salexigens) protein is Uracil phosphoribosyltransferase.